Here is a 482-residue protein sequence, read N- to C-terminus: Interferon-induced protein with tetratricopeptide repeats 5 (482 aa).

8 TPR repeats span residues 51 to 84 (LALY…IQQE), 94 to 127 (LVTW…CKKL), 138 to 173 (PETD…EPDN), 181 to 214 (AITV…NPDN), 249 to 282 (PYVL…TPTS), 338 to 371 (AFAY…ENIT), 376 to 410 (HQIH…KDRS), and 435 to 468 (VQSL…DPEN). The segment at 254-260 (YAAKFYR) is interaction with the 5'-triphosphate group of PPP-RNA.

Belongs to the IFIT family. In terms of assembly, monomer. Interacts with MAP3K7 and the components of the IKK core complex CHUK, IKBKB and IKBKG; the interaction synergizes the recruitment of IKK to MAP3K7 and enhances IKK phosphorylation.

It is found in the cell projection. Its subcellular location is the ruffle membrane. Functionally, interferon-induced RNA-binding protein involved in the human innate immune response. Has a broad and adaptable RNA structure recognition important for RNA recognition specificity in antiviral defense. Binds precursor and processed tRNAs as well as poly-U-tailed tRNA fragments. Specifically binds single-stranded RNA bearing a 5'-triphosphate group (PPP-RNA), thereby acting as a sensor of viral single-stranded RNAs. Single-stranded PPP-RNAs, which lack 2'-O-methylation of the 5' cap and bear a 5'-triphosphate group instead, are specific from viruses, providing a molecular signature to distinguish between self and non-self mRNAs by the host during viral infection. Directly binds PPP-RNA in a non-sequence-specific manner. Also recognizes and selectively binds AT-rich dsDNA. Additionally, as a mediator in innate immunity, positively regulates IKK-NFKB signaling by sinergizing the recruitment of IKK to MAP3K7. This Homo sapiens (Human) protein is Interferon-induced protein with tetratricopeptide repeats 5 (IFIT5).